The following is a 102-amino-acid chain: N(4)-acetylcytidine amidohydrolase (102 aa).

The 87-residue stretch at 6-92 (TFFGRFEADI…VIKAIYPGLD (87 aa)) folds into the ASCH domain. The active-site Proton acceptor is the Lys-20. Residue Thr-23 is the Nucleophile of the active site. Residue Glu-73 is the Proton donor of the active site.

Belongs to the N(4)-acetylcytidine amidohydrolase family.

It carries out the reaction N(4)-acetylcytidine + H2O = cytidine + acetate + H(+). The catalysed reaction is N(4)-acetyl-2'-deoxycytidine + H2O = 2'-deoxycytidine + acetate + H(+). It catalyses the reaction N(4)-acetylcytosine + H2O = cytosine + acetate + H(+). Its function is as follows. Catalyzes the hydrolysis of N(4)-acetylcytidine (ac4C). The sequence is that of N(4)-acetylcytidine amidohydrolase from Yersinia pseudotuberculosis serotype O:1b (strain IP 31758).